The primary structure comprises 146 residues: Myoglobin (146 aa).

Residues 2–140 form the Globin domain; the sequence is ADLDAVLKCW…VIADLEANYK (139 aa). H59 is a nitrite binding site. Position 59 (H59) interacts with O2. Residue H88 participates in heme b binding.

Belongs to the globin family. In terms of assembly, monomeric.

Its subcellular location is the cytoplasm. The protein resides in the sarcoplasm. It carries out the reaction Fe(III)-heme b-[protein] + nitric oxide + H2O = Fe(II)-heme b-[protein] + nitrite + 2 H(+). It catalyses the reaction H2O2 + AH2 = A + 2 H2O. Functionally, monomeric heme protein which primary function is to store oxygen and facilitate its diffusion within muscle tissues. Reversibly binds oxygen through a pentacoordinated heme iron and enables its timely and efficient release as needed during periods of heightened demand. Depending on the oxidative conditions of tissues and cells, and in addition to its ability to bind oxygen, it also has a nitrite reductase activity whereby it regulates the production of bioactive nitric oxide. Under stress conditions, like hypoxia and anoxia, it also protects cells against reactive oxygen species thanks to its pseudoperoxidase activity. In Katsuwonus pelamis (Skipjack tuna), this protein is Myoglobin (mb).